Consider the following 329-residue polypeptide: UDP-sugar transporter sqv-7 (329 aa).

Helical transmembrane passes span serine 15–leucine 34, serine 41–phenylalanine 63, tyrosine 86–leucine 108, serine 129–leucine 151, alanine 155–tyrosine 174, tyrosine 187–glycine 209, threonine 224–valine 246, serine 253–serine 275, and valine 280–valine 302.

This sequence belongs to the TPT transporter family. SLC35D subfamily.

The protein localises to the golgi apparatus membrane. Acts as a transporter of UDP-glucuronic acid (UDP-GlcA), UDP-N-acetylgalactosamine (UDP-GalNAc) and UDP-galactose (UDP-Gal) from the cytoplasm into the Golgi lumen. Involved in the biosynthesis of glycoconjugates that play a pivotal role in development. Involved in the synthesis of chondroitin sulfate and heparan sulfate proteoglycans. Required for embryonic development. Involved in vulva epithelium invagination and embryonic development. Involved in the directed migration of hermaphrodite-specific neurons. In Caenorhabditis elegans, this protein is UDP-sugar transporter sqv-7 (sqv-7).